Consider the following 211-residue polypeptide: Large ribosomal subunit protein uL4 (211 aa).

Residues 50–77 form a disordered region; it reads STLTKGEVSGGGKKPYKQKHTGKARQGS. Residues 63 to 72 are compositionally biased toward basic residues; the sequence is KPYKQKHTGK.

It belongs to the universal ribosomal protein uL4 family. As to quaternary structure, part of the 50S ribosomal subunit.

One of the primary rRNA binding proteins, this protein initially binds near the 5'-end of the 23S rRNA. It is important during the early stages of 50S assembly. It makes multiple contacts with different domains of the 23S rRNA in the assembled 50S subunit and ribosome. Functionally, forms part of the polypeptide exit tunnel. The sequence is that of Large ribosomal subunit protein uL4 from Mycoplasma genitalium (strain ATCC 33530 / DSM 19775 / NCTC 10195 / G37) (Mycoplasmoides genitalium).